Here is a 146-residue protein sequence, read N- to C-terminus: Transcriptional regulator MraZ (146 aa).

SpoVT-AbrB domains are found at residues 4-46 (TVFR…SQTE) and 75-118 (TVKV…PEQR).

The protein belongs to the MraZ family. As to quaternary structure, forms oligomers.

The protein localises to the cytoplasm. Its subcellular location is the nucleoid. The protein is Transcriptional regulator MraZ of Mesomycoplasma hyopneumoniae (strain 232) (Mycoplasma hyopneumoniae).